The primary structure comprises 83 residues: Exodeoxyribonuclease 7 small subunit (83 aa).

The protein belongs to the XseB family. In terms of assembly, heterooligomer composed of large and small subunits.

The protein resides in the cytoplasm. The catalysed reaction is Exonucleolytic cleavage in either 5'- to 3'- or 3'- to 5'-direction to yield nucleoside 5'-phosphates.. Bidirectionally degrades single-stranded DNA into large acid-insoluble oligonucleotides, which are then degraded further into small acid-soluble oligonucleotides. The protein is Exodeoxyribonuclease 7 small subunit of Rhodopseudomonas palustris (strain ATCC BAA-98 / CGA009).